We begin with the raw amino-acid sequence, 320 residues long: MQNRNTFSWVKEQMTRSISVSIIIYVITRTSISNAYPIFAQQGYENPREATGRIVCANCHLANKPVDIEVPQAVLPDTVFEAVVKIPYDMQLKQVLANGKKGALNVGALLILPEGFELAPPDRISPEMKEKMGNLSFQSYRPTKRNILVIGPVPGQKYSEIVFPILSPDPATKKDVHFLKYPIYVGGNRGRGQIYPDGSKSNNTVYNARTAGIVSRIVRKEKGGYEITIADASDGHQVVDIIPSGPELLVSEGESIKLDQPLTSNPNVGGFGQGGAEIVLQDPLRVQGLLFFLASIILAQIFLVLKKKQFEKVQLSEMNF.

Residues 1–35 form the signal peptide; that stretch reads MQNRNTFSWVKEQMTRSISVSIIIYVITRTSISNA. 4 residues coordinate heme: Tyr36, Cys56, Cys59, and His60. Residues 286 to 306 form a helical membrane-spanning segment; it reads VQGLLFFLASIILAQIFLVLK.

This sequence belongs to the cytochrome f family. As to quaternary structure, the 4 large subunits of the cytochrome b6-f complex are cytochrome b6, subunit IV (17 kDa polypeptide, petD), cytochrome f and the Rieske protein, while the 4 small subunits are PetG, PetL, PetM and PetN. The complex functions as a dimer. It depends on heme as a cofactor.

The protein resides in the plastid. The protein localises to the chloroplast thylakoid membrane. Its function is as follows. Component of the cytochrome b6-f complex, which mediates electron transfer between photosystem II (PSII) and photosystem I (PSI), cyclic electron flow around PSI, and state transitions. The sequence is that of Cytochrome f from Chloranthus spicatus (Chulantree).